The sequence spans 323 residues: tRNA U34 carboxymethyltransferase (323 aa).

Carboxy-S-adenosyl-L-methionine-binding positions include K91, W105, K110, G130, 152-154 (DPT), 181-182 (IE), M196, Y200, and R315.

It belongs to the class I-like SAM-binding methyltransferase superfamily. CmoB family. In terms of assembly, homotetramer.

The catalysed reaction is carboxy-S-adenosyl-L-methionine + 5-hydroxyuridine(34) in tRNA = 5-carboxymethoxyuridine(34) in tRNA + S-adenosyl-L-homocysteine + H(+). Catalyzes carboxymethyl transfer from carboxy-S-adenosyl-L-methionine (Cx-SAM) to 5-hydroxyuridine (ho5U) to form 5-carboxymethoxyuridine (cmo5U) at position 34 in tRNAs. This is tRNA U34 carboxymethyltransferase from Escherichia coli O6:H1 (strain CFT073 / ATCC 700928 / UPEC).